Consider the following 121-residue polypeptide: uncharacterized protein (121 aa).

It to M.jannaschii MJ0017 and MJ1466.

This is an uncharacterized protein from Aquifex aeolicus (strain VF5).